The following is a 635-amino-acid chain: Threonine--tRNA ligase (635 aa).

The 61-residue stretch at 1–61 (MVSIRLPDGS…DRDASLAIVT (61 aa)) folds into the TGS domain. A catalytic region spans residues 242-533 (DHRKLGKQLD…LIEHHAGAMP (292 aa)). 3 residues coordinate Zn(2+): Cys-333, His-384, and His-510.

The protein belongs to the class-II aminoacyl-tRNA synthetase family. Homodimer. Zn(2+) serves as cofactor.

The protein resides in the cytoplasm. The enzyme catalyses tRNA(Thr) + L-threonine + ATP = L-threonyl-tRNA(Thr) + AMP + diphosphate + H(+). Its function is as follows. Catalyzes the attachment of threonine to tRNA(Thr) in a two-step reaction: L-threonine is first activated by ATP to form Thr-AMP and then transferred to the acceptor end of tRNA(Thr). Also edits incorrectly charged L-seryl-tRNA(Thr). The chain is Threonine--tRNA ligase from Burkholderia cenocepacia (strain ATCC BAA-245 / DSM 16553 / LMG 16656 / NCTC 13227 / J2315 / CF5610) (Burkholderia cepacia (strain J2315)).